The sequence spans 307 residues: Olfactory receptor 12D2 (307 aa).

At 1–23 the chain is on the extracellular side; it reads MLNTTSVTEFLLLGVTDIQELQP. Asn3 is a glycosylation site (N-linked (GlcNAc...) asparagine). The helical transmembrane segment at 24-44 threads the bilayer; that stretch reads FLFVVFLTIYFISVTGNGAVL. At 45–52 the chain is on the cytoplasmic side; the sequence is MIVISDPR. The chain crosses the membrane as a helical span at residues 53–73; the sequence is LHSLMYFFLGNLSYLDICYST. Over 74 to 97 the chain is Extracellular; sequence VTLPKMLQNFLSTHKAISFLGCIS. Cysteines 95 and 187 form a disulfide. A helical transmembrane segment spans residues 98 to 118; that stretch reads QLHFFHSLGSTESMLFAVMAF. At 119–137 the chain is on the cytoplasmic side; it reads DLSVAICKPLRYTVIMNPQ. A helical membrane pass occupies residues 138–158; that stretch reads LCTQMAITIWVIGFFHALLHS. Topologically, residues 159–195 are extracellular; that stretch reads VMTSRLNFCGSNRIHHFLCDIKPLLKLACGNTELNQW. The helical transmembrane segment at 196-215 threads the bilayer; it reads LLSTVTGTIAMGPFFLTLLS. At 216 to 236 the chain is on the cytoplasmic side; that stretch reads YFYIITYLFFKTRSCSMLCKA. A helical transmembrane segment spans residues 237–257; that stretch reads LSTCASHFMVVILFYAPVLFT. Topologically, residues 258–270 are extracellular; it reads YIHPALESFMDQD. The chain crosses the membrane as a helical span at residues 271 to 291; it reads RIVAIMYTVVTPVLNPLIYTL. The Cytoplasmic segment spans residues 292–307; it reads RNKEVKGALGRVIRRL.

This sequence belongs to the G-protein coupled receptor 1 family.

It is found in the cell membrane. Functionally, odorant receptor. This Homo sapiens (Human) protein is Olfactory receptor 12D2 (OR12D2).